The primary structure comprises 93 residues: Small ribosomal subunit protein uS19 (93 aa).

This sequence belongs to the universal ribosomal protein uS19 family.

Functionally, protein S19 forms a complex with S13 that binds strongly to the 16S ribosomal RNA. In Geotalea daltonii (strain DSM 22248 / JCM 15807 / FRC-32) (Geobacter daltonii), this protein is Small ribosomal subunit protein uS19.